Reading from the N-terminus, the 463-residue chain is Lipase 5 (463 aa).

The N-terminal stretch at 1–14 (MLYLILFLIAPIYA) is a signal peptide. A disulfide bond links Cys110 and Cys281. The active-site Charge relay system is Ser194. Residue Asn229 is glycosylated (N-linked (GlcNAc...) asparagine). Catalysis depends on charge relay system residues Asp343 and His376. Cys359 and Cys404 form a disulfide bridge.

Belongs to the AB hydrolase superfamily. Lipase family. Class Lip subfamily.

It localises to the secreted. The enzyme catalyses a triacylglycerol + H2O = a diacylglycerol + a fatty acid + H(+). With respect to regulation, fe(2)+, Fe(3+), Hg(2+) as well as ethylenediaminetetraacetic acid (EDTA) and phenylmethanesulfonyl fluoride (PMSF) strongly inhibit the lipase activity. Surfactants such as Tween 20, Tween 80 and TritonX-100 show also inhibitory effect in the lipase activity. Sodium dodecyl sulfate (SDS) sharply decreases the lipase activity by 85%. Methanol, ethanol, and acetone have also negative effect on the lipase activity, with residual activities at 48%, 24% and 44% respectively. Finally, lipase activity is almost lost in the presence of isopropanol alcohol. Functionally, secreted lipase that is able to hydrolyze both the neutral triacylglycerols and the monopalmitate ester Tween 40, allowing the use of hydrolyzed products as carbon sources. Exhibits a preference for the short and medium chain length p-NP (C4 and C8 acyl group) esters rather than the long chain length p-NP esters (C12, C16 and C18 acyl group). Has broad lipolytic activity, which may be important for colonization and subsequent infection, therefore contributing to the persistence and virulence in human tissue. The protein is Lipase 5 of Candida albicans (strain SC5314 / ATCC MYA-2876) (Yeast).